The primary structure comprises 516 residues: Prolyl 4-hydroxylase subunit alpha-1 (516 aa).

N97 carries an N-linked (GlcNAc...) asparagine glycan. One copy of the TPR repeat lies at 189 to 222 (VYILDYLSYAVYQQGDLSKAMMLTKRLLELDPEH). N-linked (GlcNAc...) asparagine glycosylation occurs at N243. Residues 393-501 (TAEELQVANY…KWVSNKWLHE (109 aa)) form the Fe2OG dioxygenase domain. Fe cation contacts are provided by H411, D413, and H482. Residue K492 coordinates 2-oxoglutarate.

The protein belongs to the P4HA family. As to quaternary structure, heterotetramer of two alpha chains and two beta chains (the beta chain is the multi-functional PDI). Requires Fe(2+) as cofactor. L-ascorbate serves as cofactor.

Its subcellular location is the endoplasmic reticulum lumen. The catalysed reaction is L-prolyl-[collagen] + 2-oxoglutarate + O2 = trans-4-hydroxy-L-prolyl-[collagen] + succinate + CO2. Catalyzes the post-translational formation of 4-hydroxyproline in -Xaa-Pro-Gly- sequences in collagens and other proteins. This is Prolyl 4-hydroxylase subunit alpha-1 (P4HA1) from Gallus gallus (Chicken).